Here is a 50-residue protein sequence, read N- to C-terminus: Disintegrin pyramidin-A (50 aa).

Positions 1-47 (DCASGPCCRDCKFLKEGTICKRARGDNMDDYCNGKTCDCPRNPHKGE) constitute a Disintegrin domain. 4 disulfides stabilise this stretch: C2-C11, C7-C32, C8-C37, and C20-C39. The Cell attachment site signature appears at 24–26 (RGD).

It belongs to the venom metalloproteinase (M12B) family. P-II subfamily. P-IIa sub-subfamily. In terms of assembly, monomer (disintegrin). In terms of tissue distribution, expressed by the venom gland.

The protein localises to the secreted. Functionally, inhibits ADP-induced human platelet aggregation. The polypeptide is Disintegrin pyramidin-A (Echis pyramidum leakeyi (Leakey's carpet viper)).